A 631-amino-acid chain; its full sequence is DNA mismatch repair protein MutL (631 aa).

The disordered stretch occupies residues 389–423 (GEREASRQAGGQRVQETQMSSYGSGQSGGRGRSYA).

It belongs to the DNA mismatch repair MutL/HexB family.

Its function is as follows. This protein is involved in the repair of mismatches in DNA. It is required for dam-dependent methyl-directed DNA mismatch repair. May act as a 'molecular matchmaker', a protein that promotes the formation of a stable complex between two or more DNA-binding proteins in an ATP-dependent manner without itself being part of a final effector complex. This is DNA mismatch repair protein MutL from Shewanella loihica (strain ATCC BAA-1088 / PV-4).